We begin with the raw amino-acid sequence, 300 residues long: Cell surface glycoprotein CD200 receptor 1-A (300 aa).

A signal peptide spans 1-24 (MEIAGKAVCVFLLLAIIKLRRSEG). The 100-residue stretch at 25–124 (INRVSANLGH…GNFHRLYHLT (100 aa)) folds into the Ig-like V-type domain. Topologically, residues 25–213 (INRVSANLGH…SINCSSSYRD (189 aa)) are extracellular. Disulfide bonds link Cys40–Cys108 and Cys143–Cys192. Residues Asn45, Asn76, Asn105, Asn171, Asn200, and Asn206 are each glycosylated (N-linked (GlcNAc...) asparagine). Positions 122–206 (HLTVIVAPRM…ATLNETKSIN (85 aa)) constitute an Ig-like C2-type domain. The helical transmembrane segment at 214-234 (LILCIAIILSFLIIITFMAVI) threads the bilayer. Residues 235-300 (YYLKLHGCRF…NLPQGQSPAT (66 aa)) are Cytoplasmic-facing.

It belongs to the CD200R family. Post-translationally, glycosylated. Phosphorylated. Highly expressed in macrophages, peripheral blood lymphocytes (PBL) and peripheral blood mononuclear cells (PBMC). Weakly expressed in bursa, thymus, spleen, liver and brain.

The protein resides in the membrane. It localises to the secreted. The polypeptide is Cell surface glycoprotein CD200 receptor 1-A (CD200R1A) (Gallus gallus (Chicken)).